The primary structure comprises 149 residues: Cyanate hydratase (149 aa).

Active-site residues include Arg-90, Glu-93, and Ser-116.

This sequence belongs to the cyanase family.

The enzyme catalyses cyanate + hydrogencarbonate + 3 H(+) = NH4(+) + 2 CO2. Functionally, catalyzes the reaction of cyanate with bicarbonate to produce ammonia and carbon dioxide. This Aquifex aeolicus (strain VF5) protein is Cyanate hydratase.